Consider the following 303-residue polypeptide: Signal recognition particle receptor FtsY (303 aa).

GTP is bound by residues 108-115 (GVNGVGKT), 190-194 (DTAGR), and 254-257 (TKLD).

Belongs to the GTP-binding SRP family. FtsY subfamily. Part of the signal recognition particle protein translocation system, which is composed of SRP and FtsY. SRP is a ribonucleoprotein composed of Ffh and a 4.5S RNA molecule.

Its subcellular location is the cell inner membrane. The protein localises to the cytoplasm. It catalyses the reaction GTP + H2O = GDP + phosphate + H(+). Its function is as follows. Involved in targeting and insertion of nascent membrane proteins into the cytoplasmic membrane. Acts as a receptor for the complex formed by the signal recognition particle (SRP) and the ribosome-nascent chain (RNC). Interaction with SRP-RNC leads to the transfer of the RNC complex to the Sec translocase for insertion into the membrane, the hydrolysis of GTP by both Ffh and FtsY, and the dissociation of the SRP-FtsY complex into the individual components. This Rickettsia prowazekii (strain Madrid E) protein is Signal recognition particle receptor FtsY.